A 144-amino-acid polypeptide reads, in one-letter code: Small ribosomal subunit protein uS12 (144 aa).

Asp-103 bears the 3-methylthioaspartic acid mark. The segment at 125 to 144 (QQGRSRYGAKKGKAAPAKKK) is disordered. Basic residues predominate over residues 131–144 (YGAKKGKAAPAKKK).

It belongs to the universal ribosomal protein uS12 family. Part of the 30S ribosomal subunit. Contacts proteins S8 and S17. May interact with IF1 in the 30S initiation complex.

With S4 and S5 plays an important role in translational accuracy. Its function is as follows. Interacts with and stabilizes bases of the 16S rRNA that are involved in tRNA selection in the A site and with the mRNA backbone. Located at the interface of the 30S and 50S subunits, it traverses the body of the 30S subunit contacting proteins on the other side and probably holding the rRNA structure together. The combined cluster of proteins S8, S12 and S17 appears to hold together the shoulder and platform of the 30S subunit. The sequence is that of Small ribosomal subunit protein uS12 from Dehalococcoides mccartyi (strain ATCC BAA-2100 / JCM 16839 / KCTC 5957 / BAV1).